Reading from the N-terminus, the 253-residue chain is Ferritin-1, chloroplastic (253 aa).

The transit peptide at 1-47 (MALSSSKFSSFSGFSLSPVSGNGVQKPCFCDLRVGEKWGSRKFRVSA) directs the protein to the chloroplast. The tract at residues 48–80 (TTAPLTGVIFEPFEEVKKDYLAVPSVPLVSLAR) is extension peptide (EP). The region spanning 81–234 (QNFADECESV…EYVAQLRRVG (154 aa)) is the Ferritin-like diiron domain. Fe cation is bound by residues Glu98, His136, Glu182, and Gln216.

The protein belongs to the ferritin family. In terms of assembly, oligomer of 24 subunits. There are two types of subunits: L (light) chain and H (heavy) chain. The major chain can be light or heavy, depending on the species and tissue type. The functional molecule forms a roughly spherical shell with a diameter of 12 nm and contains a central cavity into which the insoluble mineral iron core is deposited.

It is found in the plastid. The protein resides in the chloroplast. The enzyme catalyses 4 Fe(2+) + O2 + 4 H(+) = 4 Fe(3+) + 2 H2O. Functionally, stores iron in a soluble, non-toxic, readily available form. Important for iron homeostasis. Has ferroxidase activity. Iron is taken up in the ferrous form and deposited as ferric hydroxides after oxidation. The chain is Ferritin-1, chloroplastic from Pisum sativum (Garden pea).